Here is a 238-residue protein sequence, read N- to C-terminus: Sugar fermentation stimulation protein homolog (238 aa).

The protein belongs to the SfsA family.

The polypeptide is Sugar fermentation stimulation protein homolog (Vibrio parahaemolyticus serotype O3:K6 (strain RIMD 2210633)).